We begin with the raw amino-acid sequence, 273 residues long: F-actin-capping protein subunit alpha (273 aa).

Belongs to the F-actin-capping protein alpha subunit family. In terms of assembly, component of the F-actin capping complex, composed of a heterodimer of an alpha and a beta subunit.

It is found in the cytoplasm. The protein localises to the cytoskeleton. It localises to the actin patch. In terms of biological role, F-actin-capping proteins bind in a Ca(2+)-independent manner to the fast growing ends of actin filaments (barbed end) thereby blocking the exchange of subunits at these ends. Unlike other capping proteins (such as gelsolin and severin), these proteins do not sever actin filaments. The sequence is that of F-actin-capping protein subunit alpha (cap1) from Aspergillus oryzae (strain ATCC 42149 / RIB 40) (Yellow koji mold).